The sequence spans 76 residues: DNA-directed RNA polymerase subunit omega (76 aa).

It belongs to the RNA polymerase subunit omega family. In terms of assembly, the RNAP catalytic core consists of 2 alpha, 1 beta, 1 beta' and 1 omega subunit. When a sigma factor is associated with the core the holoenzyme is formed, which can initiate transcription.

The catalysed reaction is RNA(n) + a ribonucleoside 5'-triphosphate = RNA(n+1) + diphosphate. Functionally, promotes RNA polymerase assembly. Latches the N- and C-terminal regions of the beta' subunit thereby facilitating its interaction with the beta and alpha subunits. The polypeptide is DNA-directed RNA polymerase subunit omega (rpoZ) (Aquifex aeolicus (strain VF5)).